Consider the following 930-residue polypeptide: Nonribosomal peptide synthetase btyA (930 aa).

Residues 31-440 (ESPHRLTYAE…RGRSKELICI (410 aa)) are adenylation (A) domain. The region spanning 570–647 (PAGNETETLL…VLARQLQDGH (78 aa)) is the Carrier domain. Position 607 is an O-(pantetheine 4'-phosphoryl)serine (S607). The thioesterase (TE) domain stretch occupies residues 667–920 (PLWLIHPIGG…EDNVHKVYRV (254 aa)).

Belongs to the NRP synthetase family.

It catalyses the reaction 2 3-(4-hydroxyphenyl)pyruvate + H(+) = (2S)-2-(4-hydoxybenzyl)-3-(4-hydroxyphenyl)-2-furonol carboxylate + H2O. It participates in secondary metabolite biosynthesis. Functionally, nonribosomal peptide synthetase; part of the gene cluster that mediates the biosynthesis of butyrolactones, natural products that show a wide range of biological activities such as antitumor, antiparasitic or anti-inflammatory activity. The nonribosomal peptide synthetase btyA is responsible for the production of butyrolactone II, the core structure of butyrolactones. BtyA first activates 4-hydroxyphenylpyruvate (HPPA) through its A domain to AMP-HPPA. The HPPA unit is then loaded to the T domain and eventually transferred to the TE domain. Upon loading of another HPPA unit to the T domain, the TE domain promotes the enolate formation on the unit attached. Then aldol condensation establishes the carbon-carbon bond between the two units, followed by ester cyclization, and keto-enol tautomerization to yield the gamma-butyrolactone core. Hydrolysis, and finally esterification of the exposed carboxylic acid group yields butyrolactone II. Two additional enzymes, a prenyltransferase and an epoxidase, may be involved in the tailoring modifications of butyrolactone II to give butyrolactone III and butyrolactone I. This Aspergillus terreus (strain NIH 2624 / FGSC A1156) protein is Nonribosomal peptide synthetase btyA.